The following is a 253-amino-acid chain: Probable proteasome subunit alpha type-7 (253 aa).

The residue at position 104 (Ser-104) is a Phosphoserine.

The protein belongs to the peptidase T1A family. In terms of assembly, the 26S proteasome consists of a 20S proteasome core and two 19S regulatory subunits. The 20S proteasome core is composed of 28 subunits that are arranged in four stacked rings, resulting in a barrel-shaped structure. The two end rings are each formed by seven alpha subunits, and the two central rings are each formed by seven beta subunits. The catalytic chamber with the active sites is on the inside of the barrel.

The protein localises to the cytoplasm. Its subcellular location is the nucleus. In terms of biological role, the proteasome is a multicatalytic proteinase complex which is characterized by its ability to cleave peptides with Arg, Phe, Tyr, Leu, and Glu adjacent to the leaving group at neutral or slightly basic pH. The proteasome has an ATP-dependent proteolytic activity. The protein is Probable proteasome subunit alpha type-7 (pre10) of Schizosaccharomyces pombe (strain 972 / ATCC 24843) (Fission yeast).